The chain runs to 460 residues: Chromosomal replication initiator protein DnaA (460 aa).

A domain I, interacts with DnaA modulators region spans residues 1–78; the sequence is MENFWQACSA…VPVEVQFVLD (78 aa). The domain II stretch occupies residues 78–123; that stretch reads DPRLVAARRPAAQASVVSDRADDVPSNVLEPIPSNATDHTPRRDQS. The domain III, AAA+ region stretch occupies residues 124-340; it reads RINTALTFDS…GALRKILAYS (217 aa). Residues Gly-168, Gly-170, Lys-171, and Thr-172 each contribute to the ATP site. The interval 341 to 460 is domain IV, binds dsDNA; sequence RFHGKDITIE…LHVLEQTLKG (120 aa).

This sequence belongs to the DnaA family. Oligomerizes as a right-handed, spiral filament on DNA at oriC.

Its subcellular location is the cytoplasm. Plays an essential role in the initiation and regulation of chromosomal replication. ATP-DnaA binds to the origin of replication (oriC) to initiate formation of the DNA replication initiation complex once per cell cycle. Binds the DnaA box (a 9 base pair repeat at the origin) and separates the double-stranded (ds)DNA. Forms a right-handed helical filament on oriC DNA; dsDNA binds to the exterior of the filament while single-stranded (ss)DNA is stabiized in the filament's interior. The ATP-DnaA-oriC complex binds and stabilizes one strand of the AT-rich DNA unwinding element (DUE), permitting loading of DNA polymerase. After initiation quickly degrades to an ADP-DnaA complex that is not apt for DNA replication. Binds acidic phospholipids. In Herminiimonas arsenicoxydans, this protein is Chromosomal replication initiator protein DnaA.